Consider the following 293-residue polypeptide: tRNA pseudouridine synthase B (293 aa).

Aspartate 40 acts as the Nucleophile in catalysis.

The protein belongs to the pseudouridine synthase TruB family. Type 1 subfamily.

The enzyme catalyses uridine(55) in tRNA = pseudouridine(55) in tRNA. In terms of biological role, responsible for synthesis of pseudouridine from uracil-55 in the psi GC loop of transfer RNAs. This is tRNA pseudouridine synthase B from Mycolicibacterium paratuberculosis (strain ATCC BAA-968 / K-10) (Mycobacterium paratuberculosis).